The chain runs to 231 residues: Ribosomal RNA small subunit methyltransferase G (231 aa).

Residues Gly-75, Phe-80, 126-127 (AE), and Arg-142 contribute to the S-adenosyl-L-methionine site.

Belongs to the methyltransferase superfamily. RNA methyltransferase RsmG family.

The protein resides in the cytoplasm. Its function is as follows. Specifically methylates the N7 position of a guanine in 16S rRNA. The sequence is that of Ribosomal RNA small subunit methyltransferase G from Mycoplasma capricolum subsp. capricolum (strain California kid / ATCC 27343 / NCTC 10154).